Consider the following 447-residue polypeptide: Elongation factor 1-alpha (447 aa).

The region spanning 5–230 (KIHISIVVIG…DQINEPKRPS (226 aa)) is the tr-type G domain. Residues 14-21 (GHVDSGKS) are G1. Position 14 to 21 (14 to 21 (GHVDSGKS)) interacts with GTP. N6,N6-dimethyllysine is present on lysine 55. The tract at residues 70–74 (GITID) is G2. Lysine 79 carries the post-translational modification N6,N6,N6-trimethyllysine. The interval 91–94 (DAPG) is G3. Residues 91 to 95 (DAPGH) and 153 to 156 (NKMD) contribute to the GTP site. The G4 stretch occupies residues 153–156 (NKMD). Lysine 187 is subject to N6,N6,N6-trimethyllysine. The tract at residues 194-196 (SGF) is G5. An N6-methyllysine modification is found at lysine 261. A 5-glutamyl glycerylphosphorylethanolamine modification is found at glutamate 289. Lysine 306 is subject to N6,N6,N6-trimethyllysine. The residue at position 362 (glutamate 362) is a 5-glutamyl glycerylphosphorylethanolamine. Lysine 396 carries the N6,N6,N6-trimethyllysine modification.

The protein belongs to the TRAFAC class translation factor GTPase superfamily. Classic translation factor GTPase family. EF-Tu/EF-1A subfamily.

It is found in the cytoplasm. Its function is as follows. This protein promotes the GTP-dependent binding of aminoacyl-tRNA to the A-site of ribosomes during protein biosynthesis. This chain is Elongation factor 1-alpha, found in Hordeum vulgare (Barley).